We begin with the raw amino-acid sequence, 734 residues long: Photosystem I P700 chlorophyll a apoprotein A2 (734 aa).

8 helical membrane-spanning segments follow: residues 46-69, 135-158, 175-199, 273-291, 330-353, 369-395, 417-439, and 517-535; these read IFASHFGQLAIIFLWTSGNLFHVA, LYTGALFLLFLSAISLIAGRFHLQ, LDHHLSGLFGVSSLAWTGHLVHVAI, IAHHHLAIAFVFFIAGHMY, LHFQLGLALASLGVITSLVAQHMY, AALYTHHQYIAGFIMTGAFAHGAIFFI, AIISHLSWASLFLGFHTLGLYVH, and FLVHHAIALGLHTTTLILV. 2 residues coordinate [4Fe-4S] cluster: C559 and C568. Helical transmembrane passes span 575–596 and 643–665; these read AFYLAVFWMLNTIGWVTFYWHW and LSVWAWMFLFGHLVWATGFMFLI. Residues H654, M662, and Y670 each coordinate chlorophyll a. Residue W671 coordinates phylloquinone. Residues 707 to 727 traverse the membrane as a helical segment; the sequence is LVGLAHFSVGYIFTYAAFLIA.

Belongs to the PsaA/PsaB family. In terms of assembly, the PsaA/B heterodimer binds the P700 chlorophyll special pair and subsequent electron acceptors. PSI consists of a core antenna complex that captures photons, and an electron transfer chain that converts photonic excitation into a charge separation. The eukaryotic PSI reaction center is composed of at least 11 subunits. P700 is a chlorophyll a/chlorophyll a' dimer, A0 is one or more chlorophyll a, A1 is one or both phylloquinones and FX is a shared 4Fe-4S iron-sulfur center. serves as cofactor.

The protein localises to the plastid. Its subcellular location is the chloroplast thylakoid membrane. The catalysed reaction is reduced [plastocyanin] + hnu + oxidized [2Fe-2S]-[ferredoxin] = oxidized [plastocyanin] + reduced [2Fe-2S]-[ferredoxin]. In terms of biological role, psaA and PsaB bind P700, the primary electron donor of photosystem I (PSI), as well as the electron acceptors A0, A1 and FX. PSI is a plastocyanin-ferredoxin oxidoreductase, converting photonic excitation into a charge separation, which transfers an electron from the donor P700 chlorophyll pair to the spectroscopically characterized acceptors A0, A1, FX, FA and FB in turn. Oxidized P700 is reduced on the lumenal side of the thylakoid membrane by plastocyanin. This Cycas taitungensis (Prince sago) protein is Photosystem I P700 chlorophyll a apoprotein A2.